We begin with the raw amino-acid sequence, 329 residues long: DNA-directed RNA polymerase subunit alpha (329 aa).

Positions 1–235 are alpha N-terminal domain (alpha-NTD); it reads MVREKVKVST…DLFIPFLHTE (235 aa). Positions 269–329 are alpha C-terminal domain (alpha-CTD); sequence IALKYIFIDQ…KQILGILEKK (61 aa).

Belongs to the RNA polymerase alpha chain family. In terms of assembly, in plastids the minimal PEP RNA polymerase catalytic core is composed of four subunits: alpha, beta, beta', and beta''. When a (nuclear-encoded) sigma factor is associated with the core the holoenzyme is formed, which can initiate transcription.

The protein resides in the plastid. It localises to the chloroplast. It catalyses the reaction RNA(n) + a ribonucleoside 5'-triphosphate = RNA(n+1) + diphosphate. DNA-dependent RNA polymerase catalyzes the transcription of DNA into RNA using the four ribonucleoside triphosphates as substrates. In Gossypium hirsutum (Upland cotton), this protein is DNA-directed RNA polymerase subunit alpha.